Reading from the N-terminus, the 883-residue chain is Translation initiation factor IF-2 (883 aa).

Disordered regions lie at residues 53–90 (RSHGKPEQAPEETDQSAKKITLNRRKQQEVTVNSGRSK) and 171–294 (EEAA…FERP). Positions 81 to 90 (EVTVNSGRSK) are enriched in polar residues. Residues 172-185 (EAAAAAKAAEALAA) are compositionally biased toward low complexity. The span at 221 to 238 (RSDDRNNRSAPRNERGPG) shows a compositional bias: basic and acidic residues. Positions 256 to 265 (GNSNNSNNRG) are enriched in low complexity. Residues 382 to 551 (QRPPVVTIMG…SVQAELLELK (170 aa)) enclose the tr-type G domain. Residues 391–398 (GHVDHGKT) form a G1 region. 391 to 398 (GHVDHGKT) provides a ligand contact to GTP. The segment at 416–420 (GITQH) is G2. The G3 stretch occupies residues 437 to 440 (DTPG). Residues 437–441 (DTPGH) and 491–494 (NKID) contribute to the GTP site. A G4 region spans residues 491–494 (NKID). The tract at residues 527-529 (SAK) is G5.

Belongs to the TRAFAC class translation factor GTPase superfamily. Classic translation factor GTPase family. IF-2 subfamily.

Its subcellular location is the cytoplasm. In terms of biological role, one of the essential components for the initiation of protein synthesis. Protects formylmethionyl-tRNA from spontaneous hydrolysis and promotes its binding to the 30S ribosomal subunits. Also involved in the hydrolysis of GTP during the formation of the 70S ribosomal complex. The chain is Translation initiation factor IF-2 from Stenotrophomonas maltophilia (strain R551-3).